The following is a 491-amino-acid chain: Peptidyl-prolyl isomerase CWC27 (491 aa).

The region spanning Thr11–Ile167 is the PPIase cyclophilin-type domain. Basic and acidic residues-rich tracts occupy residues Ala186–Glu202, Asp268–Ala298, and Ala306–Arg316. Disordered regions lie at residues Ala186–Asp427 and Arg464–Arg491. Positions Ala277–Asp327 form a coiled coil. Positions Gly323 to Ser333 are enriched in low complexity. The segment covering Ala352 to Gly367 has biased composition (basic residues). Acidic residues-rich tracts occupy residues Asp391 to Ala406 and Ala418 to Asp427. The span at Arg482–Arg491 shows a compositional bias: basic residues.

The protein belongs to the cyclophilin-type PPIase family. CWC27 subfamily. Associated with the spliceosome.

Its subcellular location is the cytoplasm. It localises to the nucleus. The catalysed reaction is [protein]-peptidylproline (omega=180) = [protein]-peptidylproline (omega=0). In terms of biological role, PPIases accelerate the folding of proteins. It catalyzes the cis-trans isomerization of proline imidic peptide bonds in oligopeptides. Involved in pre-mRNA splicing. This Cryptococcus neoformans var. neoformans serotype D (strain B-3501A) (Filobasidiella neoformans) protein is Peptidyl-prolyl isomerase CWC27 (CWC27).